Reading from the N-terminus, the 804-residue chain is Endoplasmin (804 aa).

A signal peptide spans M1–A21. The short motif at S42–T44 is the SRT pseudosubstrate motif element. N62 is a glycosylation site (N-linked (GlcNAc...) asparagine). S64 bears the Phosphoserine mark. N-linked (GlcNAc...) asparagine glycosylation occurs at N107. Positions 107, 149, and 162 each coordinate ATP. K168 carries the N6-(2-hydroxyisobutyryl)lysine modification. The residue at position 172 (S172) is a Phosphoserine. An ATP-binding site is contributed by F199. N217 is a glycosylation site (N-linked (GlcNAc...) asparagine). The disordered stretch occupies residues T288 to T323. Over residues V289–E317 the composition is skewed to acidic residues. Phosphoserine is present on residues S306 and S403. K404 is subject to N6-succinyllysine. The N-linked (GlcNAc...) asparagine glycan is linked to N445. A Phosphoserine modification is found at S447. K479 carries the post-translational modification N6-acetyllysine. N-linked (GlcNAc...) asparagine glycans are attached at residues N481 and N502. Residue K633 is modified to N6-succinyllysine. The interval D750 to L804 is disordered. Acidic residues predominate over residues D757–Q791. T786 bears the Phosphothreonine mark. Basic and acidic residues predominate over residues E792–L804. The short motif at K801–L804 is the Prevents secretion from ER element.

This sequence belongs to the heat shock protein 90 family. Homodimer; disulfide-linked. Component of an EIF2 complex at least composed of CELF1/CUGBP1, CALR, CALR3, EIF2S1, EIF2S2, HSP90B1 and HSPA5. Part of a large chaperone multiprotein complex comprising DNAJB11, HSP90B1, HSPA5, HYOU, PDIA2, PDIA4, PDIA6, PPIB, SDF2L1, UGGT1 and very small amounts of ERP29, but not, or at very low levels, CALR nor CANX. Interacts with AIMP1; regulates its retention in the endoplasmic reticulum. Hyperglycosylated form interacts with OS9; promoting its degradation by the endoplasmic reticulum associated degradation (ERAD). Interacts with CNPY3. This interaction is disrupted in the presence of ATP. Interacts with TLR4 and TLR9, but not with TLR3. Interacts with MZB1 in a calcium-dependent manner. Interacts with METTL23. Interacts with IL1B; the interaction facilitates cargo translocation into the ERGIC. Interacts with EIF2AK3. Post-translationally, phosphorylated by CK2. In terms of processing, N-glycosylated cotranslationally at Asn-217 by STT3A-containing OST-A complex: this glycosylation is constitutive. In response to various stress, 5 additional facultative sites (Asn-62, Asn-107, Asn-445, Asn-481 and Asn-502) can be glycosylated post-translationally by STT3B-containing OST-B complex, leading to a hyperglycosylated form that is degraded by the ER-associated degradation (ERAD) pathway. In normal conditions, the OST-A complex together with CCDC134 prevent glycosylation at facultative sites during protein folding, thereby preventing hyperglycosylation. Mechanistically, nascent HSP90B1 is tethered during translation to a specialized CCDC134-containing translocon that forms a microenvironment for its folding, in which STT3A associates with the SRT pseudosubstrate motif, and prevents access to facultative glycosylation sites until folding is completed, rendering its facultative sites inaccessible to the OST-B complex.

The protein localises to the endoplasmic reticulum lumen. Its subcellular location is the sarcoplasmic reticulum lumen. It localises to the melanosome. The enzyme catalyses ATP + H2O = ADP + phosphate + H(+). Its function is as follows. ATP-dependent chaperone involved in the processing of proteins in the endoplasmic reticulum, regulating their transport. Together with MESD, acts as a modulator of the Wnt pathway by promoting the folding of LRP6, a coreceptor of the canonical Wnt pathway. When associated with CNPY3, required for proper folding of Toll-like receptors. Promotes folding and trafficking of TLR4 to the cell surface. May participate in the unfolding of cytosolic leaderless cargos (lacking the secretion signal sequence) such as the interleukin 1/IL-1 to facilitate their translocation into the ERGIC (endoplasmic reticulum-Golgi intermediate compartment) and secretion; the translocation process is mediated by the cargo receptor TMED10. The chain is Endoplasmin (HSP90B1) from Macaca fascicularis (Crab-eating macaque).